We begin with the raw amino-acid sequence, 119 residues long: Large ribosomal subunit protein bL20 (119 aa).

This sequence belongs to the bacterial ribosomal protein bL20 family.

Binds directly to 23S ribosomal RNA and is necessary for the in vitro assembly process of the 50S ribosomal subunit. It is not involved in the protein synthesizing functions of that subunit. This is Large ribosomal subunit protein bL20 from Dehalococcoides mccartyi (strain ATCC BAA-2266 / KCTC 15142 / 195) (Dehalococcoides ethenogenes (strain 195)).